Here is a 602-residue protein sequence, read N- to C-terminus: Putative pentatricopeptide repeat-containing protein At1g12700, mitochondrial (602 aa).

Residues 1-95 (MMIKRSITTN…PSLVDFSRFF (95 aa)) constitute a mitochondrion transit peptide. 14 PPR repeats span residues 87–121 (SLVDFSRFFSAIARTKQFNLVLDFCKQLELNGIAH), 122–156 (NIYTLNIMINCFCRCCKTCFAYSVLGKVMKLGYEP), 157–191 (DTTTFNTLIKGLFLEGKVSEAVVLVDRMVENGCQP), 192–226 (DVVTYNSIVNGICRSGDTSLALDLLRKMEERNVKA), 227–261 (DVFTYSTIIDSLCRDGCIDAAISLFKEMETKGIKS), 262–296 (SVVTYNSLVRGLCKAGKWNDGALLLKDMVSREIVP), 297–331 (NVITFNVLLDVFVKEGKLQEANELYKEMITRGISP), 332–366 (NIITYNTLMDGYCMQNRLSEANNMLDLMVRNKCSP), 367–401 (DIVTFTSLIKGYCMVKRVDDGMKVFRNISKRGLVA), 402–436 (NAVTYSILVQGFCQSGKIKLAEELFQEMVSHGVLP), 437–471 (DVMTYGILLDGLCDNGKLEKALEIFEDLQKSKMDL), 472–506 (GIVMYTTIIEGMCKGGKVEDAWNLFCSLPCKGVKP), 507–541 (NVMTYTVMISGLCKKGSLSEANILLRKMEEDGNAP), and 542–576 (NDCTYNTLIRAHLRDGDLTASAKLIEEMKSCGFSA).

The protein belongs to the PPR family. P subfamily.

The protein localises to the mitochondrion. The chain is Putative pentatricopeptide repeat-containing protein At1g12700, mitochondrial from Arabidopsis thaliana (Mouse-ear cress).